Here is a 276-residue protein sequence, read N- to C-terminus: Putative phosphoenolpyruvate synthase regulatory protein (276 aa).

156–163 serves as a coordination point for ADP; sequence GVSRSGKT.

It belongs to the pyruvate, phosphate/water dikinase regulatory protein family. PSRP subfamily.

The catalysed reaction is [pyruvate, water dikinase] + ADP = [pyruvate, water dikinase]-phosphate + AMP + H(+). It catalyses the reaction [pyruvate, water dikinase]-phosphate + phosphate + H(+) = [pyruvate, water dikinase] + diphosphate. Functionally, bifunctional serine/threonine kinase and phosphorylase involved in the regulation of the phosphoenolpyruvate synthase (PEPS) by catalyzing its phosphorylation/dephosphorylation. The polypeptide is Putative phosphoenolpyruvate synthase regulatory protein (Acidovorax ebreus (strain TPSY) (Diaphorobacter sp. (strain TPSY))).